The chain runs to 356 residues: Tyrosine recombinase XerS (356 aa).

The Core-binding (CB) domain maps to 16 to 121 (IMPWYVLDYY…ALSSLYKYLT (106 aa)). Positions 169-354 (AFLDYVDKEY…VNDEQKNALD (186 aa)) constitute a Tyr recombinase domain. Residues Arg210, Lys234, His306, Arg309, and His332 contribute to the active site. The O-(3'-phospho-DNA)-tyrosine intermediate role is filled by Tyr341.

The protein belongs to the 'phage' integrase family. XerS subfamily.

The protein localises to the cytoplasm. FtsK is required for recombination. Functionally, site-specific tyrosine recombinase, which acts by catalyzing the cutting and rejoining of the recombining DNA molecules. Essential to convert dimers of the bacterial chromosome into monomers to permit their segregation at cell division. The polypeptide is Tyrosine recombinase XerS (Streptococcus equi subsp. zooepidemicus (strain MGCS10565)).